The following is a 256-amino-acid chain: Phosphatidylglycerol--prolipoprotein diacylglyceryl transferase (256 aa).

3 consecutive transmembrane segments (helical) span residues 19–39 (VHWY…LGYW), 56–76 (LIFY…MLFY), and 91–111 (IWEG…AAWL). An a 1,2-diacyl-sn-glycero-3-phospho-(1'-sn-glycerol)-binding site is contributed by arginine 139. A helical transmembrane segment spans residues 231–251 (FGWLTMGQVLSIPMLLIGIWL).

It belongs to the Lgt family.

It localises to the cell inner membrane. The enzyme catalyses L-cysteinyl-[prolipoprotein] + a 1,2-diacyl-sn-glycero-3-phospho-(1'-sn-glycerol) = an S-1,2-diacyl-sn-glyceryl-L-cysteinyl-[prolipoprotein] + sn-glycerol 1-phosphate + H(+). It functions in the pathway protein modification; lipoprotein biosynthesis (diacylglyceryl transfer). In terms of biological role, catalyzes the transfer of the diacylglyceryl group from phosphatidylglycerol to the sulfhydryl group of the N-terminal cysteine of a prolipoprotein, the first step in the formation of mature lipoproteins. The sequence is that of Phosphatidylglycerol--prolipoprotein diacylglyceryl transferase from Legionella pneumophila subsp. pneumophila (strain Philadelphia 1 / ATCC 33152 / DSM 7513).